We begin with the raw amino-acid sequence, 342 residues long: Mitogen-activated protein kinase kinase kinase 20 (342 aa).

A Protein kinase domain is found at 3–268 (WVRGETIGFG…AEMLLNHSFV (266 aa)). 9–17 (IGFGTFSTV) lines the ATP pocket. Serine 18 bears the Phosphoserine mark. Threonine 19 is modified (phosphothreonine). Lysine 36 lines the ATP pocket. Phosphotyrosine is present on residues tyrosine 41 and tyrosine 66. Phosphoserine occurs at positions 93 and 114. Aspartate 131 acts as the Proton acceptor in catalysis. The required for MKK3 binding stretch occupies residues 285–342 (KDEDKVLMSPKCPFEFDDWDSFTLDSNPSFDSPVERLGSLVSGSIPDWSVGGSWLTVR).

It belongs to the protein kinase superfamily. Ser/Thr protein kinase family. Interacts with MKK3 and MPK18 via its C-terminal domain. Binds to MKK5. Post-translationally, autophosphorylates; active in phosphorylated state. Dephosphorylated by ABI1. Expressed in roots, seedlings, leaves, flower buds, flowers and siliques.

The protein localises to the nucleus. It is found in the cytoplasm. The catalysed reaction is L-seryl-[protein] + ATP = O-phospho-L-seryl-[protein] + ADP + H(+). It carries out the reaction L-threonyl-[protein] + ATP = O-phospho-L-threonyl-[protein] + ADP + H(+). Its activity is regulated as follows. Activated through serine, threonine and tyrosine phosphorylation, especially upon abscisic acid (ABA) treatment. Restricted activity by ABI1-mediated dephosphorylation. Functionally, mitogen-activated protein kinase kinase (MAPKK) that phosphorylates both MKK3 and MPK18 and regulate two separate signaling pathways involved in root microtubule functions. MAPKK which regulates abscisic acid (ABA) responses in a MAPKKK20-MKK5-MPK6 cascade involved in root growth (e.g. root cell division and elongation) and stomatal response, probably via MKK5 activation by protein phosphorylation and subsequent activation of MAPK6 by MKK5. Involved in various abiotic stresses (e.g. osmotic stress, cold and hydrogen peroxide) responses by phosphorylating and thus regulating MPK6 activity, in an ABA-independent manner. The protein is Mitogen-activated protein kinase kinase kinase 20 of Arabidopsis thaliana (Mouse-ear cress).